Consider the following 59-residue polypeptide: Large ribosomal subunit protein eL37 (59 aa).

Positions 20, 23, 35, and 38 each coordinate Zn(2+). The C4-type zinc finger occupies 20-38; it reads CRRCGRHSFHRRKGYCAAC.

This sequence belongs to the eukaryotic ribosomal protein eL37 family. Zn(2+) is required as a cofactor.

In terms of biological role, binds to the 23S rRNA. This Archaeoglobus fulgidus (strain ATCC 49558 / DSM 4304 / JCM 9628 / NBRC 100126 / VC-16) protein is Large ribosomal subunit protein eL37 (rpl37e).